A 183-amino-acid chain; its full sequence is dTDP-4-dehydrorhamnose 3,5-epimerase (183 aa).

Substrate is bound by residues R24, E29, 48–50 (QDN), and R60. H63 (proton acceptor) is an active-site residue. Substrate-binding residues include K73 and H120. The active-site Proton donor is the Y133. Residues E144 and K169 each contribute to the substrate site.

Belongs to the dTDP-4-dehydrorhamnose 3,5-epimerase family. In terms of assembly, homodimer.

The enzyme catalyses dTDP-4-dehydro-6-deoxy-alpha-D-glucose = dTDP-4-dehydro-beta-L-rhamnose. Its pathway is carbohydrate biosynthesis; dTDP-L-rhamnose biosynthesis. It functions in the pathway bacterial outer membrane biogenesis; LPS O-antigen biosynthesis. Catalyzes the epimerization of the C3' and C5'positions of dTDP-6-deoxy-D-xylo-4-hexulose, forming dTDP-6-deoxy-L-lyxo-4-hexulose. In Salmonella typhimurium (strain LT2 / SGSC1412 / ATCC 700720), this protein is dTDP-4-dehydrorhamnose 3,5-epimerase.